Reading from the N-terminus, the 432-residue chain is Amino-acid acetyltransferase (432 aa).

The 140-residue stretch at 286 to 425 (EVVREASIED…ASLYNYQRNS (140 aa)) folds into the N-acetyltransferase domain.

The protein belongs to the acetyltransferase family. ArgA subfamily.

Its subcellular location is the cytoplasm. It catalyses the reaction L-glutamate + acetyl-CoA = N-acetyl-L-glutamate + CoA + H(+). The protein operates within amino-acid biosynthesis; L-arginine biosynthesis; N(2)-acetyl-L-ornithine from L-glutamate: step 1/4. The polypeptide is Amino-acid acetyltransferase (Pseudomonas putida (strain GB-1)).